The chain runs to 1911 residues: Protein TIC 214 (1911 aa).

6 helical membrane-spanning segments follow: residues 41 to 61, 81 to 103, 108 to 128, 147 to 167, 195 to 215, and 238 to 258; these read IINS…FSIG, ISAT…YAPL, GKPH…FFWN, FNIQ…HFIL, IGWL…LFWI, and IFSI…PLPI. 3 disordered regions span residues 265–299, 798–817, and 1599–1647; these read ETSE…STEE, DSEE…KEEN, and NQNQ…RKKK. The span at 268–297 shows a compositional bias: acidic residues; the sequence is ETEESEENEEESDIEITSEPKEQDEEEGST. Composition is skewed to basic and acidic residues over residues 1603-1615 and 1623-1635; these read QEKK…RDLG and QKQK…EKNY.

This sequence belongs to the TIC214 family. As to quaternary structure, part of the Tic complex.

The protein localises to the plastid. The protein resides in the chloroplast inner membrane. Involved in protein precursor import into chloroplasts. May be part of an intermediate translocation complex acting as a protein-conducting channel at the inner envelope. The sequence is that of Protein TIC 214 from Lemna minor (Common duckweed).